Reading from the N-terminus, the 412-residue chain is uncharacterized protein (412 aa).

His49 contributes to the Zn(2+) binding site. Residue Glu52 is the Proton acceptor of the active site. Zn(2+) contacts are provided by His53 and Glu129.

This sequence belongs to the peptidase M16 family. Requires Zn(2+) as cofactor.

This is an uncharacterized protein from Rickettsia typhi (strain ATCC VR-144 / Wilmington).